We begin with the raw amino-acid sequence, 179 residues long: Nucleoside diphosphate kinase 6 (179 aa).

The ATP site is built by Lys-18, Phe-67, Arg-95, Thr-101, Arg-115, and Asn-125. The active-site Pros-phosphohistidine intermediate is the His-128.

Belongs to the NDK family. It depends on Mg(2+) as a cofactor.

The catalysed reaction is a 2'-deoxyribonucleoside 5'-diphosphate + ATP = a 2'-deoxyribonucleoside 5'-triphosphate + ADP. The enzyme catalyses a ribonucleoside 5'-diphosphate + ATP = a ribonucleoside 5'-triphosphate + ADP. Major role in the synthesis of nucleoside triphosphates other than ATP. The ATP gamma phosphate is transferred to the NDP beta phosphate via a ping-pong mechanism, using a phosphorylated active-site intermediate. The protein is Nucleoside diphosphate kinase 6 (nme6) of Xenopus tropicalis (Western clawed frog).